The chain runs to 645 residues: MPRSRGGRAAPGPPPPPPPPGQAPRWSRWRVPGRLLLLLLPALCCLPGAARAAAAAAGAGNRAAVAVAVARADEAEAPFAGQNWLKSYGYLLPYDSRASALHSAKALQSAVSTMQQFYGIPVTGVLDQTTIEWMKKPRCGVPDHPHLSRRRRNKRYALTGQKWRQKHITYSIHNYTPKVGELDTRKAIRQAFDVWQKVTPLTFEEVPYHEIKSDRKEADIMIFFASGFHGDSSPFDGEGGFLAHAYFPGPGIGGDTHFDSDEPWTLGNANHDGNDLFLVAVHELGHALGLEHSSDPSAIMAPFYQYMETHNFKLPQDDLQGIQKIYGPPAEPLEPTRPLPTLPVRRIHSPSERKHERQPRPPRPPLGDRPSTPGTKPNICDGNFNTVALFRGEMFVFKDRWFWRLRNNRVQEGYPMQIEQFWKGLPARIDAAYERADGRFVFFKGDKYWVFKEVTVEPGYPHSLGELGSCLPREGIDTALRWEPVGKTYFFKGERYWRYSEERRATDPGYPKPITVWKGIPQAPQGAFISKEGYYTYFYKGRDYWKFDNQKLSVEPGYPRNILRDWMGCNQKEVERRKERRLPQDDVDIMVTINDVPGSVNAVAVVIPCILSLCILVLVYTIFQFKNKTGPQPVTYYKRPVQEWV.

Residues 1–10 (MPRSRGGRAA) show a composition bias toward low complexity. The segment at 1–26 (MPRSRGGRAAPGPPPPPPPPGQAPRW) is disordered. Residues 1–52 (MPRSRGGRAAPGPPPPPPPPGQAPRWSRWRVPGRLLLLLLPALCCLPGAARA) form the signal peptide. Pro residues predominate over residues 11–22 (PGPPPPPPPPGQ). The propeptide occupies 53–155 (AAAAAGAGNR…HLSRRRRNKR (103 aa)). At 53–602 (AAAAAGAGNR…INDVPGSVNA (550 aa)) the chain is on the extracellular side. Positions 137–144 (PRCGVPDH) match the Cysteine switch motif. Zn(2+) is bound by residues Cys-139 and His-282. Residue Glu-283 is part of the active site. Zn(2+) is bound by residues His-286 and His-292. The segment at 323 to 380 (QKIYGPPAEPLEPTRPLPTLPVRRIHSPSERKHERQPRPPRPPLGDRPSTPGTKPNIC) is disordered. Residues 329–341 (PAEPLEPTRPLPT) show a composition bias toward pro residues. A compositionally biased stretch (basic and acidic residues) spans 349–359 (SPSERKHERQP). Hemopexin repeat units lie at residues 377-425 (PNIC…WKGL), 426-471 (PARI…GSCL), 473-521 (REGI…KGIP), and 522-569 (QAPQ…WMGC). Cysteines 380 and 569 form a disulfide. A helical membrane pass occupies residues 603–623 (VAVVIPCILSLCILVLVYTIF). The Cytoplasmic segment spans residues 624–645 (QFKNKTGPQPVTYYKRPVQEWV). Positions 643 to 645 (EWV) match the PDZ-binding motif.

It belongs to the peptidase M10A family. In terms of assembly, interacts (via PDZ-binding motif) with APBA3 (via PDZ domain). Interacts with GRIP1 and GRIP2. Requires Zn(2+) as cofactor. Ca(2+) is required as a cofactor. Post-translationally, cleaved by a furin endopeptidase in the trans-Golgi network. In terms of tissue distribution, predominantly expressed in brain, kidney, pancreas and lung. Overexpressed in a series of brain tumors, including astrocytomas and glioblastomas.

The protein localises to the cell membrane. It localises to the golgi apparatus. Its subcellular location is the trans-Golgi network membrane. It is found in the secreted. The protein resides in the extracellular space. The protein localises to the extracellular matrix. Functionally, metalloprotease that mediates cleavage of N-cadherin (CDH2) and acts as a regulator of neuro-immune interactions and neural stem cell quiescence. Involved in cell-cell interactions between nociceptive neurites and mast cells, possibly by mediating cleavage of CDH2, thereby acting as a mediator of peripheral thermal nociception and inflammatory hyperalgesia. Key regulator of neural stem cells quiescence by mediating cleavage of CDH2, affecting CDH2-mediated anchorage of neural stem cells to ependymocytes in the adult subependymal zone, leading to modulate their quiescence. May play a role in axonal growth. Able to activate progelatinase A. May also be a proteoglycanase involved in degradation of proteoglycans, such as dermatan sulfate and chondroitin sulfate proteoglycans. Cleaves partially fibronectin, but not collagen type I, nor laminin. This Homo sapiens (Human) protein is Matrix metalloproteinase-24 (MMP24).